The sequence spans 314 residues: Lysophospholipase D GDPD1 (314 aa).

The Extracellular segment spans residues 1-3 (MSS). Residues 4 to 24 (TAAFCLLSTLGGYLVTSFLLL) traverse the membrane as a helical segment. Over 25–195 (KYPALLHQRK…VDKCYKENSD (171 aa)) the chain is Cytoplasmic. Residues 40–309 (SRHISHRGGA…DYPTKLKEFL (270 aa)) form the GP-PDE domain. E72, D74, and H87 together coordinate a divalent metal cation. Residues 196–216 (IPILFSLQRVLLILGLFFTGL) traverse the membrane as a helical segment. Residues 217–314 (LPFVPIREQF…LKEFLNNMSA (98 aa)) lie on the Extracellular side of the membrane.

Belongs to the glycerophosphoryl diester phosphodiesterase family.

Its subcellular location is the cytoplasm. The protein resides in the membrane. The protein localises to the perinuclear region. It is found in the endoplasmic reticulum. The catalysed reaction is a 1-O-alkyl-sn-glycero-3-phosphocholine + H2O = a 1-O-alkyl-sn-glycero-3-phosphate + choline + H(+). It carries out the reaction 1-hexadecanoyl-sn-glycero-3-phosphocholine + H2O = 1-hexadecanoyl-sn-glycero-3-phosphate + choline + H(+). The enzyme catalyses 1-hexadecanoyl-sn-glycero-3-phosphoethanolamine + H2O = 1-hexadecanoyl-sn-glycero-3-phosphate + ethanolamine + H(+). It catalyses the reaction N-hexadecanoyl-sn-glycero-3-phosphoethanolamine + H2O = N-hexadecanoylethanolamine + sn-glycerol 3-phosphate + H(+). The catalysed reaction is N-(5Z,8Z,11Z,14Z-eicosatetraenoyl)-1-(9Z-octadecenoyl)-sn-glycero-3-phosphoethanolamine + H2O = N-(5Z,8Z,11Z,14Z-eicosatetraenoyl)-ethanolamine + 1-(9Z-octadecenoyl)-sn-glycero-3-phosphate + H(+). It carries out the reaction N,1-di-(9Z-octadecenoyl)-sn-glycero-3-phosphoethanolamine + H2O = N-(9Z-octadecenoyl) ethanolamine + 1-(9Z-octadecenoyl)-sn-glycero-3-phosphate + H(+). The enzyme catalyses N-hexadecanoyl-1-(9Z-octadecenoyl)-sn-glycero-3-phosphoethanolamine + H2O = N-hexadecanoylethanolamine + 1-(9Z-octadecenoyl)-sn-glycero-3-phosphate + H(+). It catalyses the reaction 1-O-hexadecyl-sn-glycero-3-phosphocholine + H2O = 1-O-hexadecyl-sn-glycero-3-phosphate + choline + H(+). The catalysed reaction is 1-(9Z-octadecenoyl)-sn-glycero-3-phosphocholine + H2O = 1-(9Z-octadecenoyl)-sn-glycero-3-phosphate + choline + H(+). It carries out the reaction N,1-dihexadecanoyl-sn-glycero-3-phosphoethanolamine + H2O = N-hexadecanoylethanolamine + 1-hexadecanoyl-sn-glycero-3-phosphate + H(+). The enzyme catalyses 1-O-(1Z-octadecenyl)-sn-glycero-3-phospho-(N-5Z,8Z,11Z,14Z-eicosatetraenoyl)-ethanolamine + H2O = 1-O-(1Z-octadecenyl)-sn-glycero-3-phosphate + N-(5Z,8Z,11Z,14Z-eicosatetraenoyl)-ethanolamine + H(+). It catalyses the reaction 1-O-(1Z-octadecenyl)-sn-glycero-3-phospho-(N-9Z-octadecenoyl)-ethanolamine + H2O = 1-O-(1Z-octadecenyl)-sn-glycero-3-phosphate + N-(9Z-octadecenoyl) ethanolamine + H(+). The catalysed reaction is 1-O-(1Z-octadecenyl)-sn-glycero-3-phospho-N-hexadecanoyl-ethanolamine + H2O = 1-O-(1Z-octadecenyl)-sn-glycero-3-phosphate + N-hexadecanoylethanolamine + H(+). Lysophospholipase D activity is increased by magnesium and manganese and inhibited by calcium in a concentration dependent manner. Loss of lysophospholipase D activity by addition of EDTA. Hydrolyzes lysoglycerophospholipids to produce lysophosphatidic acid (LPA) and the corresponding amines. Shows a preference for 1-O-alkyl-sn-glycero-3-phosphocholine (lyso-PAF), lysophosphatidylethanolamine (lyso-PE) and lysophosphatidylcholine (lyso-PC). May be involved in bioactive N-acylethanolamine biosynthesis from both N-acyl-lysoplasmenylethanolamin (N-acyl-lysoPlsEt) and N-acyl-lysophosphatidylethanolamin (N-acyl-lysoPE). In addition, hydrolyzes glycerophospho-N-acylethanolamine to N-acylethanolamine. Does not display glycerophosphodiester phosphodiesterase activity, since it cannot hydrolyze either glycerophosphoinositol or glycerophosphocholine. The protein is Lysophospholipase D GDPD1 of Rattus norvegicus (Rat).